A 196-amino-acid chain; its full sequence is Putative 3-methyladenine DNA glycosylase (196 aa).

It belongs to the DNA glycosylase MPG family.

This Bacillus licheniformis (strain ATCC 14580 / DSM 13 / JCM 2505 / CCUG 7422 / NBRC 12200 / NCIMB 9375 / NCTC 10341 / NRRL NRS-1264 / Gibson 46) protein is Putative 3-methyladenine DNA glycosylase.